Consider the following 275-residue polypeptide: Probable CCR4-associated factor 1 homolog 7 (275 aa).

Positions 40, 42, 167, and 236 each coordinate a divalent metal cation.

Belongs to the CAF1 family. Component of the CCR4-NOT complex, at least composed of CRR4 and CAF1 proteins. A divalent metal cation serves as cofactor.

The protein resides in the nucleus. Its subcellular location is the cytoplasm. It catalyses the reaction Exonucleolytic cleavage of poly(A) to 5'-AMP.. In terms of biological role, ubiquitous transcription factor required for a diverse set of processes. It is a component of the CCR4 complex involved in the control of gene expression. The chain is Probable CCR4-associated factor 1 homolog 7 (CAF1-7) from Arabidopsis thaliana (Mouse-ear cress).